The sequence spans 151 residues: Apolipoprotein A-I (151 aa).

The signal sequence occupies residues 1-18; that stretch reads MKAVVLTLAVLFLTGSQA. Positions 19-24 are excised as a propeptide; the sequence is RHFWQQ. 2 repeat units span residues 67–88 and 89–110. A 4 X approximate tandem repeats region spans residues 67 to 143; it reads LKLLDNWDTL…EVELYRQKVA (77 aa). Methionine sulfoxide is present on M109. One copy of the 3; half-length repeat lies at 111–121; it reads KDLEEVKQKVQ. Residues 122 to 143 form repeat 4; that stretch reads PYLDDFQKKWQEEVELYRQKVA.

The protein belongs to the apolipoprotein A1/A4/E family. In terms of assembly, homodimer. Interacts with APOA1BP and CLU. Component of a sperm activating protein complex (SPAP), consisting of APOA1, an immunoglobulin heavy chain, an immunoglobulin light chain and albumin. Interacts with NDRG1. Interacts with SCGB3A2. Interacts with NAXE and YJEFN3. Glycosylated. Post-translationally, palmitoylated. In terms of processing, phosphorylation sites are present in the extracellular medium. As to expression, major protein of plasma HDL, also found in chylomicrons.

Its subcellular location is the secreted. Its function is as follows. Participates in the reverse transport of cholesterol from tissues to the liver for excretion by promoting cholesterol efflux from tissues and by acting as a cofactor for the lecithin cholesterol acyltransferase (LCAT). As part of the SPAP complex, activates spermatozoa motility. The sequence is that of Apolipoprotein A-I (APOA1) from Panthera tigris altaica (Siberian tiger).